The sequence spans 394 residues: Class II hydrophobin TH1 (394 aa).

Positions Met-1–Ala-16 are cleaved as a signal peptide. The segment at Val-17–Gly-42 is disordered. Gly residues predominate over residues Gly-33–Gly-42. Residues Gly-48–Ile-117 are hydrophobin 1. 4 disulfides stabilise this stretch: Cys-52–Cys-101, Cys-62–Cys-92, Cys-63–Cys-75, and Cys-102–Cys-113. The interval Gly-135 to Asn-157 is disordered. Residues Gly-148–Asn-157 show a composition bias toward gly residues. Hydrophobin regions lie at residues Gly-200–Ile-270 and Gly-326–Ala-394.

Belongs to the cerato-ulmin hydrophobin family. As to quaternary structure, homotetramer. Further self-assembles to form highly ordered films at water-air interfaces through intermolecular interactions. Several N-termini starting at positions 17, 20, 22, 28 and 48 have been identified by direct sequencing. Post-translationally, contains a number of intrachain disulfide bonds. In terms of processing, not glycosylated.

Its subcellular location is the secreted. It is found in the cell wall. In terms of biological role, aerial growth, conidiation, and dispersal of filamentous fungi in the environment rely upon a capability of their secreting small amphipathic proteins called hydrophobins (HPBs) with low sequence identity. Class I can self-assemble into an outermost layer of rodlet bundles on aerial cell surfaces, conferring cellular hydrophobicity that supports fungal growth, development and dispersal; whereas Class II form highly ordered films at water-air interfaces through intermolecular interactions but contribute nothing to the rodlet structure. TH1 is a class II hydrophobin that reduces water surface tension dramatically upon assembly at the water-air interface and plays a role in the formation of aerial hyphae. The polypeptide is Class II hydrophobin TH1 (TH1) (Claviceps fusiformis (Ergot fungus)).